Here is a 137-residue protein sequence, read N- to C-terminus: Small heat shock protein IbpA (137 aa).

The sHSP domain maps to 28–137 (SQSNGGYPPY…ANKPRRIEIN (110 aa)).

Belongs to the small heat shock protein (HSP20) family. As to quaternary structure, monomer. Forms homomultimers of about 100-150 subunits at optimal growth temperatures. Conformation changes to monomers at high temperatures or high ionic concentrations.

Its subcellular location is the cytoplasm. Its function is as follows. Associates with aggregated proteins, together with IbpB, to stabilize and protect them from irreversible denaturation and extensive proteolysis during heat shock and oxidative stress. Aggregated proteins bound to the IbpAB complex are more efficiently refolded and reactivated by the ATP-dependent chaperone systems ClpB and DnaK/DnaJ/GrpE. Its activity is ATP-independent. In Salmonella choleraesuis (strain SC-B67), this protein is Small heat shock protein IbpA.